Reading from the N-terminus, the 80-residue chain is Biotin synthase auxiliary protein (80 aa).

Belongs to the BsaP family. Iron-sulfur cluster is required as a cofactor.

Required for the activity of the biotin synthase BioB. The polypeptide is Biotin synthase auxiliary protein (Mycobacterium leprae (strain TN)).